The sequence spans 470 residues: 3-isopropylmalate dehydratase large subunit (470 aa).

Residues Cys348, Cys409, and Cys412 each contribute to the [4Fe-4S] cluster site.

It belongs to the aconitase/IPM isomerase family. LeuC type 1 subfamily. As to quaternary structure, heterodimer of LeuC and LeuD. The cofactor is [4Fe-4S] cluster.

It carries out the reaction (2R,3S)-3-isopropylmalate = (2S)-2-isopropylmalate. Its pathway is amino-acid biosynthesis; L-leucine biosynthesis; L-leucine from 3-methyl-2-oxobutanoate: step 2/4. In terms of biological role, catalyzes the isomerization between 2-isopropylmalate and 3-isopropylmalate, via the formation of 2-isopropylmaleate. The chain is 3-isopropylmalate dehydratase large subunit from Acidithiobacillus ferrooxidans (strain ATCC 23270 / DSM 14882 / CIP 104768 / NCIMB 8455) (Ferrobacillus ferrooxidans (strain ATCC 23270)).